Reading from the N-terminus, the 509-residue chain is Light-independent protochlorophyllide reductase subunit B (509 aa).

[4Fe-4S] cluster is bound at residue Asp-36. Asp-298 serves as the catalytic Proton donor. 433–434 (GM) is a substrate binding site.

This sequence belongs to the ChlB/BchB/BchZ family. In terms of assembly, protochlorophyllide reductase is composed of three subunits; ChlL, ChlN and ChlB. Forms a heterotetramer of two ChlB and two ChlN subunits. It depends on [4Fe-4S] cluster as a cofactor.

Its subcellular location is the plastid. It localises to the chloroplast. The catalysed reaction is chlorophyllide a + oxidized 2[4Fe-4S]-[ferredoxin] + 2 ADP + 2 phosphate = protochlorophyllide a + reduced 2[4Fe-4S]-[ferredoxin] + 2 ATP + 2 H2O. Its pathway is porphyrin-containing compound metabolism; chlorophyll biosynthesis (light-independent). Component of the dark-operative protochlorophyllide reductase (DPOR) that uses Mg-ATP and reduced ferredoxin to reduce ring D of protochlorophyllide (Pchlide) to form chlorophyllide a (Chlide). This reaction is light-independent. The NB-protein (ChlN-ChlB) is the catalytic component of the complex. The chain is Light-independent protochlorophyllide reductase subunit B from Ephedra altissima (High-climbing jointfir).